We begin with the raw amino-acid sequence, 173 residues long: Shikimate kinase (173 aa).

Residue 11-16 (GTGKTS) coordinates ATP. Thr-15 is a Mg(2+) binding site. Asp-33, Arg-57, and Gly-79 together coordinate substrate. Position 117 (Arg-117) interacts with ATP. Arg-136 is a substrate binding site.

This sequence belongs to the shikimate kinase family. Monomer. It depends on Mg(2+) as a cofactor.

It localises to the cytoplasm. It carries out the reaction shikimate + ATP = 3-phosphoshikimate + ADP + H(+). It functions in the pathway metabolic intermediate biosynthesis; chorismate biosynthesis; chorismate from D-erythrose 4-phosphate and phosphoenolpyruvate: step 5/7. Catalyzes the specific phosphorylation of the 3-hydroxyl group of shikimic acid using ATP as a cosubstrate. This Thermodesulfovibrio yellowstonii (strain ATCC 51303 / DSM 11347 / YP87) protein is Shikimate kinase.